A 244-amino-acid polypeptide reads, in one-letter code: Histone H1, orphon (244 aa).

The segment covering 1-21 has biased composition (low complexity); that stretch reads MSDPAPEIEAPVEAAPVASPP. 2 disordered regions span residues 1–59 and 113–244; these read MSDP…PVSE and QAKG…KKAK. Residues 35–45 are compositionally biased toward basic and acidic residues; that stretch reads PKAEKPKSDKP. Residues 53–127 form the H15 domain; sequence THPPVSEMVV…GASGSFKLPP (75 aa). A compositionally biased stretch (low complexity) spans 186–203; the sequence is AKPASKKAAAPKPKAAKP. Basic residues predominate over residues 213-244; the sequence is ATKAAAKKPVAKPVAKKPAAKPAKKPAAKKAK.

It belongs to the histone H1/H5 family.

It is found in the nucleus. Its subcellular location is the chromosome. Histones H1 are necessary for the condensation of nucleosome chains into higher-order structures. This Chironomus thummi thummi (Midge) protein is Histone H1, orphon.